The following is a 620-amino-acid chain: 1-deoxy-D-xylulose-5-phosphate synthase (620 aa).

Residues His75 and 116–118 (AHS) each bind thiamine diphosphate. Residue Asp147 participates in Mg(2+) binding. Thiamine diphosphate-binding positions include 148–149 (GA), Asn177, Tyr284, and Glu366. Asn177 lines the Mg(2+) pocket.

The protein belongs to the transketolase family. DXPS subfamily. Homodimer. Requires Mg(2+) as cofactor. Thiamine diphosphate serves as cofactor.

It catalyses the reaction D-glyceraldehyde 3-phosphate + pyruvate + H(+) = 1-deoxy-D-xylulose 5-phosphate + CO2. It participates in metabolic intermediate biosynthesis; 1-deoxy-D-xylulose 5-phosphate biosynthesis; 1-deoxy-D-xylulose 5-phosphate from D-glyceraldehyde 3-phosphate and pyruvate: step 1/1. Its function is as follows. Catalyzes the acyloin condensation reaction between C atoms 2 and 3 of pyruvate and glyceraldehyde 3-phosphate to yield 1-deoxy-D-xylulose-5-phosphate (DXP). The chain is 1-deoxy-D-xylulose-5-phosphate synthase from Bordetella bronchiseptica (strain ATCC BAA-588 / NCTC 13252 / RB50) (Alcaligenes bronchisepticus).